The chain runs to 399 residues: 1-deoxy-D-xylulose 5-phosphate reductoisomerase (399 aa).

NADPH contacts are provided by Thr13, Gly14, Ser15, Ile16, and Asn127. Lys128 is a 1-deoxy-D-xylulose 5-phosphate binding site. Glu129 contributes to the NADPH binding site. Asp153 contributes to the Mn(2+) binding site. 1-deoxy-D-xylulose 5-phosphate is bound by residues Ser154, Glu155, Ser187, and His210. Position 155 (Glu155) interacts with Mn(2+). Position 216 (Gly216) interacts with NADPH. The 1-deoxy-D-xylulose 5-phosphate site is built by Ser223, Asn228, Lys229, and Glu232. Glu232 serves as a coordination point for Mn(2+).

It belongs to the DXR family. Mg(2+) serves as cofactor. Requires Mn(2+) as cofactor.

The catalysed reaction is 2-C-methyl-D-erythritol 4-phosphate + NADP(+) = 1-deoxy-D-xylulose 5-phosphate + NADPH + H(+). The protein operates within isoprenoid biosynthesis; isopentenyl diphosphate biosynthesis via DXP pathway; isopentenyl diphosphate from 1-deoxy-D-xylulose 5-phosphate: step 1/6. Catalyzes the NADPH-dependent rearrangement and reduction of 1-deoxy-D-xylulose-5-phosphate (DXP) to 2-C-methyl-D-erythritol 4-phosphate (MEP). The chain is 1-deoxy-D-xylulose 5-phosphate reductoisomerase from Bordetella avium (strain 197N).